Reading from the N-terminus, the 93-residue chain is uncharacterized protein (93 aa).

Positions 26-73 (NRGTIFRPMTRNSGIVGRRGGPVAPAPFRNNVQKPGTRPPGFKPPSGV) are disordered.

This is an uncharacterized protein from Caenorhabditis elegans.